The chain runs to 89 residues: Elongation factor 1-beta (89 aa).

This sequence belongs to the EF-1-beta/EF-1-delta family.

Its function is as follows. Promotes the exchange of GDP for GTP in EF-1-alpha/GDP, thus allowing the regeneration of EF-1-alpha/GTP that could then be used to form the ternary complex EF-1-alpha/GTP/AAtRNA. The chain is Elongation factor 1-beta from Methanococcus vannielii (strain ATCC 35089 / DSM 1224 / JCM 13029 / OCM 148 / SB).